Here is a 458-residue protein sequence, read N- to C-terminus: Vacuolar basic amino acid transporter 3 (458 aa).

The Cytoplasmic segment spans residues Met1–Val9. Residues Val10–Val30 traverse the membrane as a helical segment. Residues Gly31–Pro36 are Vacuolar-facing. A helical transmembrane segment spans residues Leu37–Gly57. At Gly58–Arg67 the chain is on the cytoplasmic side. A helical membrane pass occupies residues Trp68 to Tyr88. The Vacuolar portion of the chain corresponds to Lys89–Asp132. The helical transmembrane segment at Phe133–Gly153 threads the bilayer. Residues Gly154 to Gln163 lie on the Cytoplasmic side of the membrane. A helical transmembrane segment spans residues Val164–Phe184. Over Leu185 to Arg205 the chain is Vacuolar. N-linked (GlcNAc...) asparagine glycosylation is present at Asn195. Residues Leu206–Tyr226 traverse the membrane as a helical segment. Topologically, residues Asn227–Ala248 are cytoplasmic. A helical transmembrane segment spans residues Gly249–Ile269. At Thr270–Lys277 the chain is on the vacuolar side. The chain crosses the membrane as a helical span at residues Pro278–Thr298. Topologically, residues Asn299 to Gln306 are cytoplasmic. The chain crosses the membrane as a helical span at residues Ile307 to Ser327. The Vacuolar portion of the chain corresponds to Ala328–Ser415. Residues Ile416 to Phe436 traverse the membrane as a helical segment. Topologically, residues Ser437 to Lys458 are cytoplasmic.

This sequence belongs to the major facilitator superfamily.

It is found in the vacuole membrane. In terms of biological role, transporter required for vacuolar uptake of histidine and lysine. The sequence is that of Vacuolar basic amino acid transporter 3 (VBA3) from Saccharomyces cerevisiae (strain ATCC 204508 / S288c) (Baker's yeast).